A 123-amino-acid chain; its full sequence is Small ribosomal subunit protein uS12cz/uS12cy (123 aa).

Belongs to the universal ribosomal protein uS12 family. As to quaternary structure, part of the 30S ribosomal subunit.

Its subcellular location is the plastid. It localises to the chloroplast. Its function is as follows. With S4 and S5 plays an important role in translational accuracy. Located at the interface of the 30S and 50S subunits. The protein is Small ribosomal subunit protein uS12cz/uS12cy (rps12-A) of Gossypium barbadense (Sea Island cotton).